A 553-amino-acid polypeptide reads, in one-letter code: Coiled-coil domain-containing protein 22 homolog (553 aa).

Coiled coils occupy residues 261 to 404 and 498 to 553; these read LEEL…TATQ and NVTK…VAKA.

The protein belongs to the CCDC22 family.

The polypeptide is Coiled-coil domain-containing protein 22 homolog (Drosophila pseudoobscura pseudoobscura (Fruit fly)).